A 291-amino-acid chain; its full sequence is Farnesyl diphosphate synthase (291 aa).

The isopentenyl diphosphate site is built by Lys-44, Arg-47, and His-76. Residues Asp-83 and Asp-89 each contribute to the Mg(2+) site. A (2E)-geranyl diphosphate-binding site is contributed by Arg-94. Position 95 (Arg-95) interacts with isopentenyl diphosphate. Residues Lys-177, Thr-178, Gln-215, and Lys-232 each contribute to the (2E)-geranyl diphosphate site.

This sequence belongs to the FPP/GGPP synthase family. Mg(2+) is required as a cofactor.

It is found in the cytoplasm. The catalysed reaction is isopentenyl diphosphate + (2E)-geranyl diphosphate = (2E,6E)-farnesyl diphosphate + diphosphate. In Micrococcus luteus (Micrococcus lysodeikticus), this protein is Farnesyl diphosphate synthase (fps).